Consider the following 694-residue polypeptide: Rabphilin-3A (694 aa).

Over residues 1–12 (MTDTVFSNSSNR) the composition is skewed to polar residues. The interval 1–51 (MTDTVFSNSSNRWMYPSDRPLQSNDKEQLQAGWSVHPGGQPDRQRKQEELT) is disordered. A RabBD domain is found at 44–160 (QRKQEELTDE…KRSGAWFFKG (117 aa)). The segment at 92-148 (GDGVNRCILCGEQLGMLGSACVVCEDCKKNVCTKCGVETNNRLHSVWLCKICIEQRE) adopts an FYVE-type zinc-finger fold. The Zn(2+) site is built by Cys98, Cys101, Cys115, Cys118, Cys123, Cys126, Cys140, and Cys143. The tract at residues 166 to 388 (LPQPMPIKKT…EEEANSYDSD (223 aa)) is disordered. The span at 177-186 (PQQPVSEPAA) shows a compositional bias: low complexity. Positions 202–211 (ARGDSEDRRG) are enriched in basic and acidic residues. Arg226 bears the Omega-N-methylarginine mark. Phosphoserine is present on Ser272. Low complexity predominate over residues 352-370 (PSGPYSQASAAAPQPAAAR). The span at 375–388 (PEEEEEEANSYDSD) shows a compositional bias: acidic residues. Positions 392–514 (TLGALEFSLL…KPNQRKNFNI (123 aa)) constitute a C2 1 domain. 14 residues coordinate Ca(2+): Met422, Asp423, Asp429, Asp484, Glu485, Asp486, Glu492, Glu539, Asp581, Asp587, Asp641, Tyr642, Asp643, and Asp649. The C2 2 domain occupies 550–683 (ERGKILVSLM…NKDKKIERWH (134 aa)). A phosphoserine mark is found at Ser692 and Ser693.

In terms of assembly, interacts with RAB3B, RAB3C, RAB3D, RAB8A, RAB27A and RAB27B. Interacts with RAB3A; this interaction recruits RPH3A to synaptic vesicules. Interacts (via C2B domain) with SNAP25. Interacts with deubiquitinating enzyme CAND1; this interaction results in the deubiquitination of RPH3A. Interacts with GRIN2A and DLG4; this ternary complex regulates NMDA receptor composition at postsynaptic membranes. Interacts with SNCA. The cofactor is Ca(2+). In terms of processing, ubiquitinated. Deubiquitinated by CAND1 to prevent its degradation.

It localises to the cytoplasmic vesicle. Its subcellular location is the secretory vesicle. The protein localises to the synaptic vesicle membrane. It is found in the cell projection. The protein resides in the dendritic spine. It localises to the postsynaptic cell membrane. Its subcellular location is the membrane. In terms of biological role, plays an essential role in docking and fusion steps of regulated exocytosis. At the presynaptic level, RPH3A is recruited by RAB3A to the synaptic vesicle membrane in a GTP-dependent manner where it modulates synaptic vesicle trafficking and calcium-triggered neurotransmitter release. In the post-synaptic compartment, forms a ternary complex with GRIN2A and DLG4 and regulates NMDA receptor stability. Also plays a role in the exocytosis of arginine vasopressin hormone. This chain is Rabphilin-3A (RPH3A), found in Homo sapiens (Human).